Consider the following 454-residue polypeptide: Histidine--tRNA ligase (454 aa).

Belongs to the class-II aminoacyl-tRNA synthetase family. In terms of assembly, homodimer.

It localises to the cytoplasm. It carries out the reaction tRNA(His) + L-histidine + ATP = L-histidyl-tRNA(His) + AMP + diphosphate + H(+). In Bacteroides fragilis (strain YCH46), this protein is Histidine--tRNA ligase.